Here is a 171-residue protein sequence, read N- to C-terminus: Peptide deformylase (171 aa).

Cys91 and His133 together coordinate Fe cation. The active site involves Glu134. His137 is a binding site for Fe cation.

Belongs to the polypeptide deformylase family. The cofactor is Fe(2+).

It catalyses the reaction N-terminal N-formyl-L-methionyl-[peptide] + H2O = N-terminal L-methionyl-[peptide] + formate. Removes the formyl group from the N-terminal Met of newly synthesized proteins. Requires at least a dipeptide for an efficient rate of reaction. N-terminal L-methionine is a prerequisite for activity but the enzyme has broad specificity at other positions. This is Peptide deformylase from Cronobacter sakazakii (strain ATCC BAA-894) (Enterobacter sakazakii).